Reading from the N-terminus, the 1234-residue chain is MVHPVRVGKRTRMSFSRLKEIGHMPNLIEVQLDSYNWFLKEGLQEVFEDINPIQDYTANLNLEFVGYKLDMDNIKYSVEECKERDSTYAAPLKVKVRLLNKETGEVKEQEVFMGDFPLMTEQGTFIINGAERVIVSQLVRSPGVYYDVSVDKTGKNLFSSTVIPNRGAWLEYETDSNNIIYVRIDKTRKLPITILVRAMGHGTDTEITNFFGEDERLKATIEKDNTKTHEEALLEIYKRLRPGEPPTVDSARSLIESLFFDPKRYDLSRVGRYKFNKKLSLHLRIVNQISTGDVVNPETGEILVQKGEKIDREKAVQIQQCGINSVDIEIEDTTLRVIGNNFVNINNFIDFNIDDLNIKESVYYPALKQILDNYSSEESIREQIKKNIHNLIPKHIIRDDIYATVSYELGLAYGVGHTDDIDHLGNRRLRSVGELLQNQFRIGLSRMERVVKERMTIQDQEVITPQALINIRPVAASIKEFFGSSQLSQFMDQTNPLSELTHKRRLSALGPGGLSRERAGFEVRDVHHSHYGRMCPIETPEGPNIGLINSLATYAKVNEYGFIETPYRKVNKKEKIVTNEIVYMTADEEDEYLIGRANEPIDENGKFVDSKITVRDKEDVIVVPAEDVDYMDLSPRQLVSVATAMIPFLENDDASRALMGSNMQRQAVPLLKPQAPVVGTGIEYKAAVDSGVLPKARNAGVVSYVCANEIRVRRDSDGGTDIYRLLKFQRSNQGTCINQRPIVEKGEIVQQGTVLADGPSTDLGEIALGKNIRMGFTTWEGYNYEDAMLISEELVKKDVFTSIHIEEYESEARDTKLGPEEITRDIPNVGEDALKDIDDRGIIKIGAEVRAGDILVGKVTPKGETELTAEERLLRAIFGEKAREVRDTSLRVPHGEAGIIVDVKVFTRKNGDELSPGVNKLVRCYIAQKRKISVGDKMAGRHGNKGVISRVLPEEDMPFLPDGRPLEICLNPLGVPSRMNIGQVLEVHLGWAASELGWHIATPVFDGATEEDIIECLKKAGYREDGKTILYDGRTGEPFNRPVTVGYMYILKLAHLVDDKIHARSTGPYSLVTQQPLGGKAQFGGQRFGEMEVWALEAYGAAHTLQEILTVKSDDVVGRVKTYEAIVKGENIPEPGVPESFKVLIKELQALCLDVKVLNDDNQEIKLKESVDEEIENLDVNIEGNEDFVLSSQDNDYEEPEENDEEDELNLDYDDLTLDDLKDDLKIEDFNDEH.

Positions 1189 to 1212 (VLSSQDNDYEEPEENDEEDELNLD) are disordered. Over residues 1195–1212 (NDYEEPEENDEEDELNLD) the composition is skewed to acidic residues.

It belongs to the RNA polymerase beta chain family. As to quaternary structure, the RNAP catalytic core consists of 2 alpha, 1 beta, 1 beta' and 1 omega subunit. When a sigma factor is associated with the core the holoenzyme is formed, which can initiate transcription.

The enzyme catalyses RNA(n) + a ribonucleoside 5'-triphosphate = RNA(n+1) + diphosphate. DNA-dependent RNA polymerase catalyzes the transcription of DNA into RNA using the four ribonucleoside triphosphates as substrates. The polypeptide is DNA-directed RNA polymerase subunit beta (Clostridium kluyveri (strain NBRC 12016)).